The sequence spans 1212 residues: Dermatan-sulfate epimerase-like protein (1212 aa).

Residues 1-20 (MALMFTGHLLFLALLMFAFS) form the signal peptide. Residues Asn28, Asn666, Asn688, and Asn709 are each glycosylated (N-linked (GlcNAc...) asparagine). The next 2 helical transmembrane spans lie at 764–784 (IIFPFGFKFNIAVGLILCISL) and 803–823 (WILILVIALWFIELLDVWSTC). Asn874 is a glycosylation site (N-linked (GlcNAc...) asparagine).

It belongs to the dermatan-sulfate isomerase family. Expressed in different brain areas as well as in multiple other peripheral tissues.

The protein resides in the membrane. The polypeptide is Dermatan-sulfate epimerase-like protein (DSEL) (Homo sapiens (Human)).